We begin with the raw amino-acid sequence, 254 residues long: Small ribosomal subunit protein mS40 (254 aa).

A mitochondrion-targeting transit peptide spans 1 to 33; sequence MAAPLRHTLLKLVPTLLRSSYVAQVPLQTLCTR. Position 47 is a phosphoserine (serine 47). The disordered stretch occupies residues 218-254; sequence YQGNLLEESGPPPESMPEMPTTPPAESSIEQPGSQSA. Residues 227–240 are compositionally biased toward pro residues; that stretch reads GPPPESMPEMPTTP.

This sequence belongs to the bacterial ribosomal protein bS18 family. Mitochondrion-specific ribosomal protein mS40 subfamily. Component of the mitochondrial ribosome small subunit (28S) which comprises a 12S rRNA and about 30 distinct proteins.

It is found in the mitochondrion. The sequence is that of Small ribosomal subunit protein mS40 (Mrps18b) from Mus musculus (Mouse).